A 934-amino-acid chain; its full sequence is Complement component C6 (934 aa).

Residues 1–21 form the signal peptide; it reads MTRHLTLCFILLVMLIDKSEA. Intrachain disulfides connect C22-C61, C24-C65, C35-C73, C39-C78, C82-C117, C93-C127, C96-C133, C140-C151, C146-C164, C158-C173, and C180-C218. TSP type-1 domains are found at residues 22–79 and 81–134; these read CFCD…QTCP and NCVL…KLCK. The 38-residue stretch at 138-175 folds into the LDL-receptor class A domain; that stretch reads TNCKNKFLCDSGRCIPSKLECNGENDCGDNSDERNCGR. Residues L156, N159, E161, D163, D169, and E170 each contribute to the Ca(2+) site. The 347-residue stretch at 176–522 folds into the MACPF domain; sequence TKPVCTRIYT…EYAAKFDPCQ (347 aa). A beta stranded transmembrane segment spans residues 278–290; that stretch reads FFPIPIFHFSEKN. N-linked (GlcNAc...) asparagine glycosylation occurs at N324. 16 disulfides stabilise this stretch: C399/C420, C499/C623, C521/C570, C523/C539, C526/C541, C543/C552, C577/C611, C589/C601, C644/C686, C672/C699, C704/C746, C732/C761, C773/C823, C784/C801, C786/C837, and C793/C816. A beta stranded transmembrane segment spans residues 402–415; sequence YETKKLKFLYMEIH. The 31-residue stretch at 523-553 folds into the EGF-like domain; sequence CAPCPNNGRPRLSGTECLCVCQSGTYGENCE. Residues 565–612 enclose the TSP type-1 3 domain; that stretch reads DGNWGCWSSWSACNAAYRRSRTRECNNPAPQRGGQSCGGKDQQEEDCT. CCP stretches follow at residues 611–688 and 689–765; these read CTVS…RCLP and DRTW…EQAI. Sushi domains are found at residues 642–701 and 702–763; these read SGCS…ECQR and TSCL…TCEQ. The C5b-binding domain stretch occupies residues 642 to 934; the sequence is SGCSQPPLPE…EILNPGRCPD (293 aa). Residues 766–840 form a factor I module (FIM) 1 region; the sequence is LTKSKDLCPP…FVHSGSCQEG (75 aa). Residues 785–839 enclose the Kazal-like 1 domain; it reads ICMSPEEDCSAYSEDLCIFDGGSSQYFTSSACKFLAGKCLNNTQSHFVHSGSCQE. Residues N825, N855, and N872 are each glycosylated (N-linked (GlcNAc...) asparagine). Residues 858–934 form a factor I module (FIM) 2 region; it reads KRVSCGYNTC…EILNPGRCPD (77 aa). Cystine bridges form between C862–C873, C867–C919, C880–C897, C882–C932, and C888–C912. In terms of domain architecture, Kazal-like 2 spans 876–934; the sequence is HTSNCVCLLPPQCSKDENQLYCVKIGSSMREKTVNICTLGAVRCANIKVEILNPGRCPD.

The protein belongs to the complement C6/C7/C8/C9 family. Component of the membrane attack complex (MAC), composed of complement C5b, C6, C7, C8A, C8B, C8G and multiple copies of the pore-forming subunit C9. All cysteine residues are assumed to be cross-linked to one another. Individual modules containing an even number of conserved cysteine residues are supposed to have disulfide linkages only within the same module.

It localises to the secreted. Its subcellular location is the target cell membrane. Its activity is regulated as follows. Membrane attack complex (MAC) assembly is inhibited by CD59, thereby protecting self-cells from damage during complement activation. MAC assembly is also inhibited by clusterin (CLU) chaperones that inhibit polymerization of C9. Functionally, component of the membrane attack complex (MAC), a multiprotein complex activated by the complement cascade, which inserts into a target cell membrane and forms a pore, leading to target cell membrane rupture and cell lysis. The MAC is initiated by proteolytic cleavage of C5 into complement C5b in response to the classical, alternative, lectin and GZMK complement pathways. The complement pathways consist in a cascade of proteins that leads to phagocytosis and breakdown of pathogens and signaling that strengthens the adaptive immune system. Together with component C5b, involved in MAC complex assembly: complement C5b and C6 associate with the outer leaflet of target cell membrane, reducing the energy for membrane bending. This is Complement component C6 from Mus musculus (Mouse).